Reading from the N-terminus, the 210-residue chain is Menaquinone reductase, multiheme cytochrome c subunit (210 aa).

Residues 20–40 (GGAAPFFVGLVVALVFGWWAF) traverse the membrane as a helical segment. 18 residues coordinate heme: C67, C70, H71, C88, C91, H92, C140, C143, H144, C152, C155, H156, C186, C189, H190, C205, C208, and H209.

This sequence belongs to the multiheme cytochrome c family. In terms of assembly, the Qrc complex is composed of four subunits: QrcA, QrcB, QrcC and QrcD. Can form a supercomplex with the [NiFe] hydrogenase HynA1 and the tetraheme Type I cytochrome c3 TpIc(3), its physiological electron donors. It depends on heme c as a cofactor.

It localises to the cell inner membrane. Component of the respiratory Qrc complex, that catalyzes the reduction of the menaquinone pool using electrons transferred from the reduced periplasmic cytochrome c3, and which is probably involved in sulfate respiration. Is likely essential for growth on H(2) or formate since the periplasmic hydrogenases and/or formate dehydrogenases act as primary electron donors for the Qrc complex. This Nitratidesulfovibrio vulgaris (strain ATCC 29579 / DSM 644 / CCUG 34227 / NCIMB 8303 / VKM B-1760 / Hildenborough) (Desulfovibrio vulgaris) protein is Menaquinone reductase, multiheme cytochrome c subunit.